Reading from the N-terminus, the 207-residue chain is Pyridoxine/pyridoxamine 5'-phosphate oxidase (207 aa).

FMN-binding positions include 53–58 (RMVLLK), 68–69 (YT), Lys75, and Gln97. Residue Lys58 coordinates substrate. Residues Tyr115, Arg119, and Ser123 each coordinate substrate. FMN is bound by residues 132–133 (QS) and Trp177. Residue 183-185 (RLH) participates in substrate binding. Arg187 is an FMN binding site.

This sequence belongs to the pyridoxamine 5'-phosphate oxidase family. Homodimer. It depends on FMN as a cofactor.

It catalyses the reaction pyridoxamine 5'-phosphate + O2 + H2O = pyridoxal 5'-phosphate + H2O2 + NH4(+). The enzyme catalyses pyridoxine 5'-phosphate + O2 = pyridoxal 5'-phosphate + H2O2. Its pathway is cofactor metabolism; pyridoxal 5'-phosphate salvage; pyridoxal 5'-phosphate from pyridoxamine 5'-phosphate: step 1/1. The protein operates within cofactor metabolism; pyridoxal 5'-phosphate salvage; pyridoxal 5'-phosphate from pyridoxine 5'-phosphate: step 1/1. Its function is as follows. Catalyzes the oxidation of either pyridoxine 5'-phosphate (PNP) or pyridoxamine 5'-phosphate (PMP) into pyridoxal 5'-phosphate (PLP). This chain is Pyridoxine/pyridoxamine 5'-phosphate oxidase, found in Bartonella quintana (strain Toulouse) (Rochalimaea quintana).